The chain runs to 210 residues: Large ribosomal subunit protein mL57 (210 aa).

The transit peptide at 1–59 (MLTRHCNRLGLQIENKFVFRSSSWNCVRRIGKIACNENKYRYEMTSTEEDIDSFFSRVF) directs the protein to the mitochondrion.

Belongs to the ribonuclease III family. Mitochondrion-specific ribosomal protein mL57 subfamily. In terms of assembly, component of the mitochondrial large ribosomal subunit (mt-LSU). Mature yeast 74S mitochondrial ribosomes consist of a small (37S) and a large (54S) subunit. The 37S small subunit contains a 15S ribosomal RNA (15S mt-rRNA) and at least 32 different proteins. The 54S large subunit contains a 21S rRNA (21S mt-rRNA) and at least 45 different proteins. mL57 forms a heterodimer with mL44 and stabilizes rRNA expansion segments 1/2 at a membrane-facing protuberance close to the point of attachment of the ribosome to the translocon in the membrane.

It localises to the mitochondrion. Component of the mitochondrial ribosome (mitoribosome), a dedicated translation machinery responsible for the synthesis of mitochondrial genome-encoded proteins, including at least some of the essential transmembrane subunits of the mitochondrial respiratory chain. The mitoribosomes are attached to the mitochondrial inner membrane and translation products are cotranslationally integrated into the membrane. The polypeptide is Large ribosomal subunit protein mL57 (mrp15) (Schizosaccharomyces pombe (strain 972 / ATCC 24843) (Fission yeast)).